A 123-amino-acid chain; its full sequence is Large ribosomal subunit protein bL17 (123 aa).

This sequence belongs to the bacterial ribosomal protein bL17 family. As to quaternary structure, part of the 50S ribosomal subunit. Contacts protein L32.

This is Large ribosomal subunit protein bL17 from Borrelia hermsii (strain HS1 / DAH).